A 201-amino-acid chain; its full sequence is L(+)-tartrate dehydratase subunit beta (201 aa).

Histidine 37 is a catalytic residue.

This sequence belongs to the class-I fumarase family. In terms of assembly, heterotetramer of two alpha and two beta subunits.

It carries out the reaction (2R,3R)-tartrate = oxaloacetate + H2O. The protein is L(+)-tartrate dehydratase subunit beta (ttdB) of Escherichia coli O6:K15:H31 (strain 536 / UPEC).